The sequence spans 121 residues: Small ribosomal subunit protein uS13 (121 aa).

The tract at residues 91–121 (HRMSLPVRGQRTRTNARTRRGSRKTVAGRKK) is disordered. Basic residues predominate over residues 100-121 (QRTRTNARTRRGSRKTVAGRKK).

This sequence belongs to the universal ribosomal protein uS13 family. Part of the 30S ribosomal subunit. Forms a loose heterodimer with protein S19. Forms two bridges to the 50S subunit in the 70S ribosome.

Its function is as follows. Located at the top of the head of the 30S subunit, it contacts several helices of the 16S rRNA. In the 70S ribosome it contacts the 23S rRNA (bridge B1a) and protein L5 of the 50S subunit (bridge B1b), connecting the 2 subunits; these bridges are implicated in subunit movement. Contacts the tRNAs in the A and P-sites. This Prochlorococcus marinus (strain MIT 9515) protein is Small ribosomal subunit protein uS13.